The chain runs to 200 residues: Intraflagellar transport protein 43 homolog (200 aa).

Disordered regions lie at residues 56–76 and 175–200; these read KTGKSQRKTDDDDSQETIAAP and ERIDAKDQPSDSRSRNARETLISSKY. The span at 175-192 shows a compositional bias: basic and acidic residues; the sequence is ERIDAKDQPSDSRSRNAR.

The protein belongs to the IFT43 family. In terms of assembly, component of the IFT complex A (IFT-A) composed of at least che-11, daf-10, dyf-2, ift-139, ift-43 and ifta-1. Expressed in ciliated sensory neurons.

Its subcellular location is the cell projection. It localises to the cilium. In terms of biological role, as a component of IFT complex A (IFT-A), a complex required for retrograde ciliary transport and entry into cilia of G protein-coupled receptors (GPCRs), it is involved in ciliogenesis. In particular, may act redundantly with the intraflagellar transport protein ift-139 to regulate the transport of specific ciliary cargo proteins such as che-3 which are related to motility. This chain is Intraflagellar transport protein 43 homolog, found in Caenorhabditis elegans.